Here is a 123-residue protein sequence, read N- to C-terminus: Large ribosomal subunit protein uL14 (123 aa).

This sequence belongs to the universal ribosomal protein uL14 family. As to quaternary structure, part of the 50S ribosomal subunit. Forms a cluster with proteins L3 and L19. In the 70S ribosome, L14 and L19 interact and together make contacts with the 16S rRNA in bridges B5 and B8.

Functionally, binds to 23S rRNA. Forms part of two intersubunit bridges in the 70S ribosome. The polypeptide is Large ribosomal subunit protein uL14 (Sodalis glossinidius (strain morsitans)).